We begin with the raw amino-acid sequence, 200 residues long: MDPSAESIAGVDEVGRGCWFGPVFAGAVVLTEVAAVELLAEGLTDSKALTVRRRARLVPLIEDAATAWALGQASAREIDALGIRSATELSMLRALQRLPTPLELVLVDGVLPLRLWMGPQRTVVRGDSKCAAIAAASVLAKQARDGLIKRLASRFYGYGLERHVGYGTAIHRRALLDLGPTALHRRSFLTKLFAVHGSLT.

Positions 6–200 (ESIAGVDEVG…KLFAVHGSLT (195 aa)) constitute an RNase H type-2 domain. 3 residues coordinate a divalent metal cation: Asp12, Glu13, and Asp108.

Belongs to the RNase HII family. Requires Mn(2+) as cofactor. Mg(2+) serves as cofactor.

It is found in the cytoplasm. The enzyme catalyses Endonucleolytic cleavage to 5'-phosphomonoester.. In terms of biological role, endonuclease that specifically degrades the RNA of RNA-DNA hybrids. The chain is Ribonuclease HII from Prochlorococcus marinus (strain MIT 9303).